A 158-amino-acid polypeptide reads, in one-letter code: Crossover junction endodeoxyribonuclease RuvC (158 aa).

Active-site residues include aspartate 7, glutamate 66, and aspartate 139. 3 residues coordinate Mg(2+): aspartate 7, glutamate 66, and aspartate 139.

Belongs to the RuvC family. Homodimer which binds Holliday junction (HJ) DNA. The HJ becomes 2-fold symmetrical on binding to RuvC with unstacked arms; it has a different conformation from HJ DNA in complex with RuvA. In the full resolvosome a probable DNA-RuvA(4)-RuvB(12)-RuvC(2) complex forms which resolves the HJ. The cofactor is Mg(2+).

The protein localises to the cytoplasm. It carries out the reaction Endonucleolytic cleavage at a junction such as a reciprocal single-stranded crossover between two homologous DNA duplexes (Holliday junction).. The RuvA-RuvB-RuvC complex processes Holliday junction (HJ) DNA during genetic recombination and DNA repair. Endonuclease that resolves HJ intermediates. Cleaves cruciform DNA by making single-stranded nicks across the HJ at symmetrical positions within the homologous arms, yielding a 5'-phosphate and a 3'-hydroxyl group; requires a central core of homology in the junction. The consensus cleavage sequence is 5'-(A/T)TT(C/G)-3'. Cleavage occurs on the 3'-side of the TT dinucleotide at the point of strand exchange. HJ branch migration catalyzed by RuvA-RuvB allows RuvC to scan DNA until it finds its consensus sequence, where it cleaves and resolves the cruciform DNA. The polypeptide is Crossover junction endodeoxyribonuclease RuvC (Nitratiruptor sp. (strain SB155-2)).